A 325-amino-acid polypeptide reads, in one-letter code: Protease HtpX homolog 2 (325 aa).

2 helical membrane-spanning segments follow: residues 17-37 (IAILVLGFALIYGILGYFFGF) and 42-62 (LLITGALAFVTIFTILQWLFG). His-146 serves as a coordination point for Zn(2+). Residue Glu-147 is part of the active site. Residue His-150 participates in Zn(2+) binding. A run of 2 helical transmembrane segments spans residues 158–178 (LLLAVGLIPTLLYWIGYGLWW) and 195–215 (ILFLIGIALIAFSFLFNLFVL). Residue Glu-222 coordinates Zn(2+).

This sequence belongs to the peptidase M48B family. The cofactor is Zn(2+).

It is found in the cell membrane. The polypeptide is Protease HtpX homolog 2 (Sulfurisphaera tokodaii (strain DSM 16993 / JCM 10545 / NBRC 100140 / 7) (Sulfolobus tokodaii)).